Consider the following 427-residue polypeptide: 3-phosphoshikimate 1-carboxyvinyltransferase (427 aa).

K20 provides a ligand contact to phosphoenolpyruvate. 3-phosphoshikimate contacts are provided by S21 and R25. The phosphoenolpyruvate site is built by G92 and R120. S166, A167, Q168, D312, and K339 together coordinate 3-phosphoshikimate. Q168 lines the phosphoenolpyruvate pocket. D312 (proton acceptor) is an active-site residue. Phosphoenolpyruvate is bound by residues R343 and R385.

Homotetramer.

It localises to the cytoplasm. The enzyme catalyses 3-phosphoshikimate + phosphoenolpyruvate = 5-O-(1-carboxyvinyl)-3-phosphoshikimate + phosphate. Its pathway is metabolic intermediate biosynthesis; chorismate biosynthesis; chorismate from D-erythrose 4-phosphate and phosphoenolpyruvate: step 6/7. Competitively inhibited by glyphosate. Activated by ammonium, rubidium or potassium ions. In terms of biological role, catalyzes the transfer of the enolpyruvyl moiety of phosphoenolpyruvate (PEP) to the 5-hydroxyl of shikimate-3-phosphate (S3P) to produce enolpyruvyl shikimate-3-phosphate and inorganic phosphate. This is 3-phosphoshikimate 1-carboxyvinyltransferase from Streptococcus pneumoniae serotype 4 (strain ATCC BAA-334 / TIGR4).